The primary structure comprises 447 residues: UDP-glycosyltransferase 79B10 (447 aa).

UDP-alpha-D-glucose contacts are provided by residues S260, 319 to 321 (VQQ), 336 to 344 (HCGFGSMWE), and 358 to 361 (LADQ).

Belongs to the UDP-glycosyltransferase family.

This is UDP-glycosyltransferase 79B10 (UGT79B10) from Arabidopsis thaliana (Mouse-ear cress).